We begin with the raw amino-acid sequence, 582 residues long: Mitogen-activated protein kinase 17 (582 aa).

The segment at 22–61 is disordered; that stretch reads SSSFHLTTTGDDTVKDLHDPRREDAEGDGWEEVHEGPESD. Residues 33–45 are compositionally biased toward basic and acidic residues; sequence DTVKDLHDPRRED. One can recognise a Protein kinase domain in the interval 105–396; that stretch reads YKVSEVIGKG…AEEALTDPYF (292 aa). ATP contacts are provided by residues 111–119 and K134; that span reads IGKGSYGVV. D231 (proton acceptor) is an active-site residue. Residue T267 is modified to Phosphothreonine. The short motif at 267–269 is the TXY element; it reads TDY. At Y269 the chain carries Phosphotyrosine. 2 disordered regions span residues 474–502 and 542–582; these read EGVS…GNKH and ISAS…QLKT. The segment covering 482–491 has biased composition (polar residues); sequence SSPQLRQNAS. The span at 493–502 shows a compositional bias: basic and acidic residues; it reads PRERAIGNKH. The segment covering 557 to 572 has biased composition (acidic residues); that stretch reads DQEDSLTESMDETADE.

Belongs to the protein kinase superfamily. CMGC Ser/Thr protein kinase family. MAP kinase subfamily. Dually phosphorylated on Thr-267 and Tyr-269, which activates the enzyme.

The catalysed reaction is L-seryl-[protein] + ATP = O-phospho-L-seryl-[protein] + ADP + H(+). It carries out the reaction L-threonyl-[protein] + ATP = O-phospho-L-threonyl-[protein] + ADP + H(+). With respect to regulation, activated by threonine and tyrosine phosphorylation. This is Mitogen-activated protein kinase 17 (MPK17) from Oryza sativa subsp. japonica (Rice).